A 90-amino-acid chain; its full sequence is Bombyxin B-6 (90 aa).

Residues 1-20 (MMKTSVMFMLVVVISLMCSS) form the signal peptide. Intrachain disulfides connect cysteine 30-cysteine 76, cysteine 42-cysteine 89, and cysteine 75-cysteine 80. Residues 49-67 (GVAQYAPYFWTRQYLGSRG) constitute a propeptide, c peptide like.

The protein belongs to the insulin family. Heterodimer of a B chain and an A chain linked by two disulfide bonds.

It is found in the secreted. In terms of biological role, brain peptide responsible for activation of prothoracic glands to produce ecdysone in insects. The sequence is that of Bombyxin B-6 (BBXB6) from Bombyx mori (Silk moth).